A 112-amino-acid chain; its full sequence is Macrodomain Ori protein (112 aa).

The tract at residues phenylalanine 91–aspartate 112 is disordered. Residues glycine 103–aspartate 112 are compositionally biased toward acidic residues.

The protein belongs to the MaoP family.

In terms of biological role, involved in the organization of the Ori region of the chromosome into a macrodomain (MD). It constrains DNA mobility in the Ori macrodomain and limits long-distance DNA interactions with other chromosomal regions. This chain is Macrodomain Ori protein, found in Salmonella choleraesuis (strain SC-B67).